A 212-amino-acid polypeptide reads, in one-letter code: Leucyl/phenylalanyl-tRNA--protein transferase (212 aa).

The protein belongs to the L/F-transferase family.

Its subcellular location is the cytoplasm. The catalysed reaction is N-terminal L-lysyl-[protein] + L-leucyl-tRNA(Leu) = N-terminal L-leucyl-L-lysyl-[protein] + tRNA(Leu) + H(+). The enzyme catalyses N-terminal L-arginyl-[protein] + L-leucyl-tRNA(Leu) = N-terminal L-leucyl-L-arginyl-[protein] + tRNA(Leu) + H(+). It catalyses the reaction L-phenylalanyl-tRNA(Phe) + an N-terminal L-alpha-aminoacyl-[protein] = an N-terminal L-phenylalanyl-L-alpha-aminoacyl-[protein] + tRNA(Phe). Functions in the N-end rule pathway of protein degradation where it conjugates Leu, Phe and, less efficiently, Met from aminoacyl-tRNAs to the N-termini of proteins containing an N-terminal arginine or lysine. The polypeptide is Leucyl/phenylalanyl-tRNA--protein transferase (Jannaschia sp. (strain CCS1)).